A 361-amino-acid chain; its full sequence is Peptide chain release factor 1 (361 aa).

Gln237 carries the N5-methylglutamine modification. Basic and acidic residues predominate over residues 284–296 (EDEKRRSEEDSTR). A disordered region spans residues 284-305 (EDEKRRSEEDSTRRNLVSSGDR).

This sequence belongs to the prokaryotic/mitochondrial release factor family. In terms of processing, methylated by PrmC. Methylation increases the termination efficiency of RF1.

The protein localises to the cytoplasm. Its function is as follows. Peptide chain release factor 1 directs the termination of translation in response to the peptide chain termination codons UAG and UAA. This chain is Peptide chain release factor 1, found in Shewanella piezotolerans (strain WP3 / JCM 13877).